We begin with the raw amino-acid sequence, 88 residues long: UPF0367 protein AM1_1885 (88 aa).

The protein belongs to the UPF0367 family.

This Acaryochloris marina (strain MBIC 11017) protein is UPF0367 protein AM1_1885.